The sequence spans 216 residues: Imidazole glycerol phosphate synthase subunit HisH (216 aa).

A Glutamine amidotransferase type-1 domain is found at 2-216; that stretch reads RVAIIDYGSG…LIANFLKWKP (215 aa). The active-site Nucleophile is the C88. Residues H196 and E198 contribute to the active site.

In terms of assembly, heterodimer of HisH and HisF.

The protein resides in the cytoplasm. The catalysed reaction is 5-[(5-phospho-1-deoxy-D-ribulos-1-ylimino)methylamino]-1-(5-phospho-beta-D-ribosyl)imidazole-4-carboxamide + L-glutamine = D-erythro-1-(imidazol-4-yl)glycerol 3-phosphate + 5-amino-1-(5-phospho-beta-D-ribosyl)imidazole-4-carboxamide + L-glutamate + H(+). It catalyses the reaction L-glutamine + H2O = L-glutamate + NH4(+). The protein operates within amino-acid biosynthesis; L-histidine biosynthesis; L-histidine from 5-phospho-alpha-D-ribose 1-diphosphate: step 5/9. In terms of biological role, IGPS catalyzes the conversion of PRFAR and glutamine to IGP, AICAR and glutamate. The HisH subunit catalyzes the hydrolysis of glutamine to glutamate and ammonia as part of the synthesis of IGP and AICAR. The resulting ammonia molecule is channeled to the active site of HisF. The sequence is that of Imidazole glycerol phosphate synthase subunit HisH from Brucella abortus biovar 1 (strain 9-941).